The primary structure comprises 353 residues: Phenol hydroxylase P5 protein (353 aa).

In terms of domain architecture, 2Fe-2S ferredoxin-type spans 3 to 93; that stretch reads YQVTIEPIGT…DMVIEADVDE (91 aa). The [2Fe-2S] cluster site is built by C37, C42, C45, and C77. One can recognise an FAD-binding FR-type domain in the interval 102–201; that stretch reads VQDYQATVIE…SGPYGQFFVR (100 aa).

The multicomponent enzyme phenol hydroxylase is formed by P0, P1, P2, P3, P4 and P5 polypeptides. Requires FAD as cofactor. It depends on [2Fe-2S] cluster as a cofactor.

It catalyses the reaction phenol + NADPH + O2 + H(+) = catechol + NADP(+) + H2O. It functions in the pathway aromatic compound metabolism; phenol degradation. In terms of biological role, catabolizes phenol, and some of its methylated derivatives. P5 is required for growth on phenol, and for in vitro phenol hydroxylase activity. Functionally, probable electron transfer from NADPH, via FAD and the 2Fe-2S center, to the oxygenase activity site of the enzyme. This Acinetobacter pittii (strain PHEA-2) protein is Phenol hydroxylase P5 protein (mphP).